The sequence spans 88 residues: Sec-independent protein translocase protein TatA (88 aa).

Residues 1 to 21 traverse the membrane as a helical segment; sequence MGSLSPWHWVVLVVVVVLLFG. The span at 49 to 71 shows a compositional bias: polar residues; that stretch reads ENQAQASALETPMQNPTVVQSQR. The disordered stretch occupies residues 49-88; that stretch reads ENQAQASALETPMQNPTVVQSQRVVPPWSTEQDHTEARPA. Over residues 79–88 the composition is skewed to basic and acidic residues; it reads EQDHTEARPA.

The protein belongs to the TatA/E family. As to quaternary structure, the Tat system comprises two distinct complexes: a TatABC complex, containing multiple copies of TatA, TatB and TatC subunits, and a separate TatA complex, containing only TatA subunits. Substrates initially bind to the TatABC complex, which probably triggers association of the separate TatA complex to form the active translocon.

It is found in the cell membrane. Functionally, part of the twin-arginine translocation (Tat) system that transports large folded proteins containing a characteristic twin-arginine motif in their signal peptide across membranes. TatA could form the protein-conducting channel of the Tat system. In Mycobacterium leprae (strain TN), this protein is Sec-independent protein translocase protein TatA.